The sequence spans 301 residues: uncharacterized protein (301 aa).

The first 21 residues, 1 to 21 (MKIKLILVLIVFLTIVNVNNS), serve as a signal peptide directing secretion. Residues asparagine 19, asparagine 59, asparagine 102, and asparagine 180 are each glycosylated (N-linked (GlcNAc...) asparagine).

The protein resides in the secreted. This is an uncharacterized protein from Dictyostelium discoideum (Social amoeba).